We begin with the raw amino-acid sequence, 74 residues long: uncharacterized protein (74 aa).

This is an uncharacterized protein from Archaeoglobus fulgidus (strain ATCC 49558 / DSM 4304 / JCM 9628 / NBRC 100126 / VC-16).